Reading from the N-terminus, the 352-residue chain is MVFRIASSPYTHNQRQTSRIMLLVLLAAVPGIAAQLWFFGWGTLVQILLASVSALLAEALVLKLRKQSVAATLKDNSALLTGLLLAVSIPPLAPWWMVVLGTVFAVIIAKQLYGGLGQNPFNPAMIGYVVLLISFPVQMTSWLPPHEIAVNIPGFIDAIQVIFSGHTTSGGDMNTLRLGIDGISQATPLDTFKTSVRAGHSVEEIMQYPIYSGILAGAGWQWVNLAWLAGGVWLLWQKAIRWHIPLSFLVTLALCATLGWLFSPDTLAAPQIHLLSGATMLGAFFILTDPVTASTTNRGRLIFGALAGLLVWMIRSFGGYPDGVAFAVLLANITVPLIDYYTRPRVYGHRKG.

4 helical membrane passes run 20–40, 42–62, 89–109, and 123–143; these read IMLL…WFFG, GTLV…ALVL, IPPL…VIIA, and PAMI…TSWL. Position 187 is an FMN phosphoryl threonine (Thr187). The next 5 helical transmembrane spans lie at 214–234, 242–262, 267–287, 301–321, and 322–342; these read ILAG…GVWL, WHIP…GWLF, LAAP…FFIL, LIFG…GGYP, and DGVA…DYYT.

Belongs to the NqrB/RnfD family. The complex is composed of six subunits: RsxA, RsxB, RsxC, RsxD, RsxE and RsxG. Requires FMN as cofactor.

It localises to the cell inner membrane. Part of a membrane-bound complex that couples electron transfer with translocation of ions across the membrane. Required to maintain the reduced state of SoxR. This is Ion-translocating oxidoreductase complex subunit D from Escherichia coli O81 (strain ED1a).